The sequence spans 131 residues: Small ribosomal subunit protein uS9 (131 aa).

It belongs to the universal ribosomal protein uS9 family.

This Glaesserella parasuis serovar 5 (strain SH0165) (Haemophilus parasuis) protein is Small ribosomal subunit protein uS9.